Here is a 239-residue protein sequence, read N- to C-terminus: Ribosomal RNA small subunit methyltransferase G (239 aa).

S-adenosyl-L-methionine is bound by residues Gly78, Phe83, 129–130, and Arg148; that span reads AE.

This sequence belongs to the methyltransferase superfamily. RNA methyltransferase RsmG family.

It is found in the cytoplasm. Functionally, specifically methylates the N7 position of a guanine in 16S rRNA. The protein is Ribosomal RNA small subunit methyltransferase G of Clostridium botulinum (strain ATCC 19397 / Type A).